The following is an 81-amino-acid chain: Photosystem I iron-sulfur center (81 aa).

4Fe-4S ferredoxin-type domains follow at residues 2–31 (SHAVKIYDTCIGCTQCVRACPLDVLEMVPW) and 39–68 (IAASPRTEDCVGCKRCETACPTDFLSIRVY). [4Fe-4S] cluster contacts are provided by Cys11, Cys14, Cys17, Cys21, Cys48, Cys51, Cys54, and Cys58.

The cyanobacterial PSI reaction center is composed of one copy each of PsaA,B,C,D,E,F,I,J,K,L,M and X, and forms trimeric complexes. [4Fe-4S] cluster serves as cofactor.

The protein resides in the cellular thylakoid membrane. It carries out the reaction reduced [plastocyanin] + hnu + oxidized [2Fe-2S]-[ferredoxin] = oxidized [plastocyanin] + reduced [2Fe-2S]-[ferredoxin]. In terms of biological role, apoprotein for the two 4Fe-4S centers FA and FB of photosystem I (PSI); essential for photochemical activity. FB is the terminal electron acceptor of PSI, donating electrons to ferredoxin. The C-terminus interacts with PsaA/B/D and helps assemble the protein into the PSI complex. Required for binding of PsaD and PsaE to PSI. PSI is a plastocyanin/cytochrome c6-ferredoxin oxidoreductase, converting photonic excitation into a charge separation, which transfers an electron from the donor P700 chlorophyll pair to the spectroscopically characterized acceptors A0, A1, FX, FA and FB in turn. This chain is Photosystem I iron-sulfur center, found in Prochlorococcus marinus (strain MIT 9303).